The sequence spans 148 residues: Transcription antitermination protein NusB (148 aa).

Belongs to the NusB family.

Functionally, involved in transcription antitermination. Required for transcription of ribosomal RNA (rRNA) genes. Binds specifically to the boxA antiterminator sequence of the ribosomal RNA (rrn) operons. This chain is Transcription antitermination protein NusB, found in Desulfitobacterium hafniense (strain DSM 10664 / DCB-2).